Consider the following 363-residue polypeptide: tRNA/tmRNA (uracil-C(5))-methyltransferase (363 aa).

Positions 187, 215, 220, 236, and 296 each coordinate S-adenosyl-L-methionine. Cys-321 (nucleophile) is an active-site residue. The active-site Proton acceptor is the Glu-355.

It belongs to the class I-like SAM-binding methyltransferase superfamily. RNA M5U methyltransferase family. TrmA subfamily.

The enzyme catalyses uridine(54) in tRNA + S-adenosyl-L-methionine = 5-methyluridine(54) in tRNA + S-adenosyl-L-homocysteine + H(+). It catalyses the reaction uridine(341) in tmRNA + S-adenosyl-L-methionine = 5-methyluridine(341) in tmRNA + S-adenosyl-L-homocysteine + H(+). In terms of biological role, dual-specificity methyltransferase that catalyzes the formation of 5-methyluridine at position 54 (m5U54) in all tRNAs, and that of position 341 (m5U341) in tmRNA (transfer-mRNA). This Pseudomonas fluorescens protein is tRNA/tmRNA (uracil-C(5))-methyltransferase.